The following is a 518-amino-acid chain: Glutamate--cysteine ligase (518 aa).

Belongs to the glutamate--cysteine ligase type 1 family. Type 1 subfamily.

It catalyses the reaction L-cysteine + L-glutamate + ATP = gamma-L-glutamyl-L-cysteine + ADP + phosphate + H(+). Its pathway is sulfur metabolism; glutathione biosynthesis; glutathione from L-cysteine and L-glutamate: step 1/2. The protein is Glutamate--cysteine ligase of Salmonella paratyphi C (strain RKS4594).